The following is a 331-amino-acid chain: Ketol-acid reductoisomerase (NADP(+)) (331 aa).

The KARI N-terminal Rossmann domain occupies 2-182; sequence AQLFYDSDAD…GGTRAGILET (181 aa). Residues 25–28, Ser-51, Ser-53, and 83–86 each bind NADP(+); these read YGSQ and DEFQ. His-108 is a catalytic residue. An NADP(+)-binding site is contributed by Gly-134. Residues 183 to 328 form the KARI C-terminal knotted domain; sequence NFKEETETDL…KGLRSMFSWL (146 aa). The Mg(2+) site is built by Asp-191, Glu-195, Glu-227, and Glu-231. Ser-252 contributes to the substrate binding site.

This sequence belongs to the ketol-acid reductoisomerase family. Mg(2+) serves as cofactor.

It catalyses the reaction (2R)-2,3-dihydroxy-3-methylbutanoate + NADP(+) = (2S)-2-acetolactate + NADPH + H(+). The catalysed reaction is (2R,3R)-2,3-dihydroxy-3-methylpentanoate + NADP(+) = (S)-2-ethyl-2-hydroxy-3-oxobutanoate + NADPH + H(+). It participates in amino-acid biosynthesis; L-isoleucine biosynthesis; L-isoleucine from 2-oxobutanoate: step 2/4. The protein operates within amino-acid biosynthesis; L-valine biosynthesis; L-valine from pyruvate: step 2/4. Its function is as follows. Involved in the biosynthesis of branched-chain amino acids (BCAA). Catalyzes an alkyl-migration followed by a ketol-acid reduction of (S)-2-acetolactate (S2AL) to yield (R)-2,3-dihydroxy-isovalerate. In the isomerase reaction, S2AL is rearranged via a Mg-dependent methyl migration to produce 3-hydroxy-3-methyl-2-ketobutyrate (HMKB). In the reductase reaction, this 2-ketoacid undergoes a metal-dependent reduction by NADPH to yield (R)-2,3-dihydroxy-isovalerate. This is Ketol-acid reductoisomerase (NADP(+)) from Synechococcus sp. (strain CC9605).